Here is a 358-residue protein sequence, read N- to C-terminus: uncharacterized protein (358 aa).

Positions 1–15 (MITGKTISLPLSVIA) are cleaved as a signal peptide. Cys16 is lipidated: N-palmitoyl cysteine. The S-diacylglycerol cysteine moiety is linked to residue Cys16. The tract at residues 331 to 358 (PCGTGSPGNPPPNINSVAQHRISTNTNR) is disordered. The segment covering 347–358 (VAQHRISTNTNR) has biased composition (polar residues).

It is found in the cell membrane. This is an uncharacterized protein from Sinorhizobium fredii (strain NBRC 101917 / NGR234).